The chain runs to 226 residues: Cytidylate kinase (226 aa).

11-19 (GPAAAGKST) is an ATP binding site.

This sequence belongs to the cytidylate kinase family. Type 1 subfamily.

It localises to the cytoplasm. It catalyses the reaction CMP + ATP = CDP + ADP. It carries out the reaction dCMP + ATP = dCDP + ADP. The protein is Cytidylate kinase of Bacillus licheniformis (strain ATCC 14580 / DSM 13 / JCM 2505 / CCUG 7422 / NBRC 12200 / NCIMB 9375 / NCTC 10341 / NRRL NRS-1264 / Gibson 46).